We begin with the raw amino-acid sequence, 472 residues long: NALCN channel auxiliary factor 2 (472 aa).

Residues 47-67 form a helical membrane-spanning segment; that stretch reads LASLLFFTVLLADHLWLCAGA. The segment at 77–114 is disordered; it reads AMRPPWGAGRERQPVPPRAVLPLPPPPPGEPSAPPGTC. A compositionally biased stretch (pro residues) spans 90–110; it reads PVPPRAVLPLPPPPPGEPSAP. Asparagine 120 and asparagine 193 each carry an N-linked (GlcNAc...) asparagine glycan. The helical transmembrane segment at 433–453 threads the bilayer; the sequence is LCVLVLMLLHTVVSFSSNQGG.

The protein belongs to the NALF family.

Its subcellular location is the membrane. In terms of biological role, probable component of the NALCN channel complex, a channel that regulates the resting membrane potential and controls neuronal excitability. This chain is NALCN channel auxiliary factor 2, found in Homo sapiens (Human).